The chain runs to 207 residues: Pyridoxal 5'-phosphate synthase subunit PdxT (207 aa).

Gly-51 to Ser-53 provides a ligand contact to L-glutamine. Residue Cys-83 is the Nucleophile of the active site. L-glutamine is bound by residues Arg-112 and Ile-143 to Arg-144. Residues His-184 and Glu-186 each act as charge relay system in the active site.

It belongs to the glutaminase PdxT/SNO family. In terms of assembly, in the presence of PdxS, forms a dodecamer of heterodimers. Only shows activity in the heterodimer.

It catalyses the reaction aldehydo-D-ribose 5-phosphate + D-glyceraldehyde 3-phosphate + L-glutamine = pyridoxal 5'-phosphate + L-glutamate + phosphate + 3 H2O + H(+). The enzyme catalyses L-glutamine + H2O = L-glutamate + NH4(+). Its pathway is cofactor biosynthesis; pyridoxal 5'-phosphate biosynthesis. Functionally, catalyzes the hydrolysis of glutamine to glutamate and ammonia as part of the biosynthesis of pyridoxal 5'-phosphate. The resulting ammonia molecule is channeled to the active site of PdxS. The sequence is that of Pyridoxal 5'-phosphate synthase subunit PdxT from Kineococcus radiotolerans (strain ATCC BAA-149 / DSM 14245 / SRS30216).